We begin with the raw amino-acid sequence, 372 residues long: Glutamate 5-kinase (372 aa).

Position 14 (Lys-14) interacts with ATP. Substrate-binding residues include Ser-54, Asp-141, and Asn-153. ATP-binding positions include 173-174 and 215-221; these read TD and TGGMATK. One can recognise a PUA domain in the interval 280–358; that stretch reads RGQVVLDTGA…DNIEEILGYD (79 aa).

The protein belongs to the glutamate 5-kinase family.

Its subcellular location is the cytoplasm. The catalysed reaction is L-glutamate + ATP = L-glutamyl 5-phosphate + ADP. It participates in amino-acid biosynthesis; L-proline biosynthesis; L-glutamate 5-semialdehyde from L-glutamate: step 1/2. Catalyzes the transfer of a phosphate group to glutamate to form L-glutamate 5-phosphate. The protein is Glutamate 5-kinase of Shewanella halifaxensis (strain HAW-EB4).